Consider the following 433-residue polypeptide: MAPAGRKLQHESRCRPSRPVDAWRAAATTRGRCMGTPGARRTARRGGWGLPRTSSGLAAAGLLCTALTACLCWGQLPPLPWASPAPQRPVSVLLWWEPFGGRGGHSKPPPDCSLRFNISGCRLLTDRAAYGEAQAVLFHHRDLVKGPPDWPPPWGAQERTDEALELRVFDDQEGAVMLAREALETTGSRPPGQRWVWMNFESPSHTPGLRGLAKDLFNWTLSYRTDSDIFVPYGFLYPRSHPAEQPSGLGPPLARKRGLVAWVVSHWNERQARVRYYHQLRRHVSVDVFGRAGPGQPVPAVGLLHTVARYKFYLAFENSQHVDYNTEKLWRNAFLAGAVPVLLGPDRANYEGFVPRGSFIHVDDFPSAASLAAYLLFLDRNVAVYRRYFHWRRSYAVHITSFWDEPWCQTCRAVQTSGDQPKSIHNLADWFQR.

The segment at 1–20 (MAPAGRKLQHESRCRPSRPV) is disordered. The Cytoplasmic segment spans residues 1–54 (MAPAGRKLQHESRCRPSRPVDAWRAAATTRGRCMGTPGARRTARRGGWGLPRTS). The chain crosses the membrane as a helical; Signal-anchor for type II membrane protein span at residues 55–74 (SGLAAAGLLCTALTACLCWG). The Lumenal portion of the chain corresponds to 75 to 433 (QLPPLPWASP…IHNLADWFQR (359 aa)). Residues Asn-117 and Asn-218 are each glycosylated (N-linked (GlcNAc...) asparagine).

It belongs to the glycosyltransferase 10 family. As to expression, in adult, highest expression in spleen, testis, brain, lung, kidney and skeletal muscle and to a lesser extent in liver and heart.

It localises to the golgi apparatus. It is found in the golgi stack membrane. It carries out the reaction a beta-D-galactosyl-(1-&gt;4)-N-acetyl-beta-D-glucosaminyl derivative + GDP-beta-L-fucose = a beta-D-galactosyl-(1-&gt;4)-[alpha-L-fucosyl-(1-&gt;3)]-N-acetyl-beta-D-glucosaminyl derivative + GDP + H(+). It catalyses the reaction an N-acetyl-alpha-neuraminyl-(2-&gt;3)-beta-D-galactosyl-(1-&gt;4)-N-acetyl-beta-D-glucosaminyl derivative + GDP-beta-L-fucose = an alpha-Neu5Ac-(2-&gt;3)-beta-D-Gal-(1-&gt;4)-[alpha-L-Fuc-(1-&gt;3)]-beta-D-GlcNAc derivative + GDP + H(+). The enzyme catalyses an alpha-Neu5Ac-(2-&gt;3)-beta-D-Gal-(1-&gt;4)-beta-D-GlcNAc-(1-&gt;3)-beta-D-Gal-(1-&gt;4)-beta-D-GlcNAc derivative + GDP-beta-L-fucose = an alpha-Neu5Ac-(2-&gt;3)-beta-D-Gal-(1-&gt;4)-beta-D-GlcNAc-(1-&gt;3)-beta-D-Gal-(1-&gt;4)-[alpha-L-Fuc-(1-&gt;3)]-beta-D-GlcNAc derivative + GDP + H(+). The catalysed reaction is an alpha-Neu5Ac-(2-&gt;3)-beta-D-Gal-(1-&gt;4)-beta-D-GlcNAc6S derivative + GDP-beta-L-fucose = an alpha-Neu5Ac-(2-&gt;3)-beta-D-Gal-(1-&gt;4)-[alpha-L-Fuc-(1-&gt;3)]-beta-D-GlcNAc6S derivative + GDP + H(+). It functions in the pathway protein modification; protein glycosylation. Catalyzes alpha(1-&gt;3) linkage of fucosyl moiety transferred from GDP-beta-L-fucose to N-acetyl glucosamine (GlcNAc) within type 2 lactosamine (LacNAc, Gal-beta(1-&gt;4)GlcNAc) glycan attached to N- or O-linked glycoproteins. Robustly fucosylates nonsialylated distal LacNAc unit of the polylactosamine chain to form Lewis X antigen (CD15), a glycan determinant known to mediate important cellular functions in development and immunity. Fucosylates with lower efficiency sialylated LacNAc acceptors to form sialyl Lewis X and 6-sulfo sialyl Lewis X determinants that serve as recognition epitopes for C-type lectins. Together with FUT7 contributes to SELE, SELL and SELP selectin ligand biosynthesis and selectin-dependent lymphocyte homing, leukocyte migration and blood leukocyte homeostasis. In a cell type specific manner, may also fucosylate the internal LacNAc unit of the polylactosamine chain to form VIM-2 antigen that serves as recognition epitope for SELE. This is Alpha-(1,3)-fucosyltransferase 4 (Fut4) from Rattus norvegicus (Rat).